The following is a 382-amino-acid chain: tRNA-specific 2-thiouridylase MnmA (382 aa).

Residues 18–25 (AMSGGVDS) and leucine 44 each bind ATP. The active-site Nucleophile is the cysteine 112. Cysteine 112 and cysteine 209 are oxidised to a cystine. Position 136 (glycine 136) interacts with ATP. Positions 159 to 161 (RDQ) are interaction with tRNA. Cysteine 209 functions as the Cysteine persulfide intermediate in the catalytic mechanism.

It belongs to the MnmA/TRMU family.

It is found in the cytoplasm. The catalysed reaction is S-sulfanyl-L-cysteinyl-[protein] + uridine(34) in tRNA + AH2 + ATP = 2-thiouridine(34) in tRNA + L-cysteinyl-[protein] + A + AMP + diphosphate + H(+). Its function is as follows. Catalyzes the 2-thiolation of uridine at the wobble position (U34) of tRNA, leading to the formation of s(2)U34. The sequence is that of tRNA-specific 2-thiouridylase MnmA from Methylobacterium sp. (strain 4-46).